Here is a 185-residue protein sequence, read N- to C-terminus: Ribosome-recycling factor (185 aa).

The protein belongs to the RRF family.

It localises to the cytoplasm. Its function is as follows. Responsible for the release of ribosomes from messenger RNA at the termination of protein biosynthesis. May increase the efficiency of translation by recycling ribosomes from one round of translation to another. In Azoarcus sp. (strain BH72), this protein is Ribosome-recycling factor.